Reading from the N-terminus, the 309-residue chain is Olfactory receptor 10J5 (309 aa).

The Extracellular segment spans residues M1–I25. Residue N5 is glycosylated (N-linked (GlcNAc...) asparagine). The chain crosses the membrane as a helical span at residues T26–V46. Topologically, residues T47–H54 are cytoplasmic. The chain crosses the membrane as a helical span at residues L55 to L75. Over V76–T99 the chain is Extracellular. A disulfide bridge connects residues C97 and C188. Residues Q100–Y120 traverse the membrane as a helical segment. Residues D121–G139 lie on the Cytoplasmic side of the membrane. A helical transmembrane segment spans residues L140–V160. Over T161–I196 the chain is Extracellular. A helical membrane pass occupies residues I197 to S216. The Cytoplasmic segment spans residues Y217–T236. A helical membrane pass occupies residues F237 to A257. Residues Y258–D270 are Extracellular-facing. A helical membrane pass occupies residues L271–L291. Topologically, residues R292–S309 are cytoplasmic.

This sequence belongs to the G-protein coupled receptor 1 family. In terms of tissue distribution, expressed in both the aorta, the coronary artery and umbilical vein endothelial cells (HUVECs) (at protein level).

The protein resides in the cell membrane. Olfactory receptor. Activated by the synthetic floral odorant, lyral, and by alpha-cedrene, a sesquiterpene constituent of cedarwood oil. Its activation increases intracellular Ca(2+). Acts as a key regulator of myogenesis through its actions on cell migration and adhesion by activating the Ca(2+)-dependent AKT signal transduction pathway. Also acts as a regulator of angiogenesis. Moreover, plays a role in the regulation of lipid accumulation in hepatocytes via the cAMP-PKA pathway. May be involved in sperm chemotaxis and motility. The polypeptide is Olfactory receptor 10J5 (Homo sapiens (Human)).